The following is a 405-amino-acid chain: Phosphopentomutase (405 aa).

Mn(2+) is bound by residues D10, D297, H302, D338, H339, and H350.

It belongs to the phosphopentomutase family. The cofactor is Mn(2+).

It localises to the cytoplasm. It catalyses the reaction 2-deoxy-alpha-D-ribose 1-phosphate = 2-deoxy-D-ribose 5-phosphate. The catalysed reaction is alpha-D-ribose 1-phosphate = D-ribose 5-phosphate. Its pathway is carbohydrate degradation; 2-deoxy-D-ribose 1-phosphate degradation; D-glyceraldehyde 3-phosphate and acetaldehyde from 2-deoxy-alpha-D-ribose 1-phosphate: step 1/2. Isomerase that catalyzes the conversion of deoxy-ribose 1-phosphate (dRib-1-P) and ribose 1-phosphate (Rib-1-P) to deoxy-ribose 5-phosphate (dRib-5-P) and ribose 5-phosphate (Rib-5-P), respectively. The sequence is that of Phosphopentomutase from Pseudoalteromonas translucida (strain TAC 125).